Here is a 643-residue protein sequence, read N- to C-terminus: MHLGDLTHPNELHGLKLSELEDVARQIRDRHLQVVSTSGGHLGPGLGVVELTLALYQTLDLDRDRVIWDVGHQAYPHKLITGRFNDFHTLRQQNGVAGYLKRSESNFDHFGAGHASTSISAALGMAMARDNRGEDFKCVAVIGDGALTGGMALEAINHAGHLPETPLLVVLNDNDMSISPPVGALSNVLNRARLSPPMQFLSGSVEESVRHLPFMGGELPAELNRLKGSMRRLAVPKVGAVFEELGFTYMGPIDGHDIGEMMRTFQAAHRDGGPVLVHVVTKKGKGYPYAEADQVGYHAQSAFDLTTGKAIPSKKPKPASYSKVFGQTLVKLCEQNSRVVGITAAMATGTGLDLLQKAVPNQYVDVGIAEQHAVTLAAGMACEGLRPVVAIYSTFLQRAYDQLIHDVGIQNLPVTFVLDRAGIVGADGPTHQGQYDISYMRSIPNFTVMAPKDEAELQRMLVTCLNHDGPTALRIPRGSGVGMPLMEEGWEALPIGRGELLREGDDLLIVAYGSMVHPALDTATLLEEAGLSTTVINARFLRPLDQALIHPLARRIRRVVTMEEGALAGGFGAAVLESLSDQDISIPLLRIGIPDKMVDHATPQQSKESLEMIPVQMAERIRRRFDLGGRDFAGAASVPAIQS.

Thiamine diphosphate-binding positions include His72 and 113–115 (GHA). Mg(2+) is bound at residue Asp144. Residues 145–146 (GA), Asn174, Tyr287, and Glu370 each bind thiamine diphosphate. Asn174 contacts Mg(2+).

Belongs to the transketolase family. DXPS subfamily. As to quaternary structure, homodimer. The cofactor is Mg(2+). Thiamine diphosphate is required as a cofactor.

The catalysed reaction is D-glyceraldehyde 3-phosphate + pyruvate + H(+) = 1-deoxy-D-xylulose 5-phosphate + CO2. The protein operates within metabolic intermediate biosynthesis; 1-deoxy-D-xylulose 5-phosphate biosynthesis; 1-deoxy-D-xylulose 5-phosphate from D-glyceraldehyde 3-phosphate and pyruvate: step 1/1. In terms of biological role, catalyzes the acyloin condensation reaction between C atoms 2 and 3 of pyruvate and glyceraldehyde 3-phosphate to yield 1-deoxy-D-xylulose-5-phosphate (DXP). The polypeptide is 1-deoxy-D-xylulose-5-phosphate synthase (Parasynechococcus marenigrum (strain WH8102)).